The chain runs to 287 residues: UPF0761 membrane protein MS0032 (287 aa).

The next 6 helical transmembrane spans lie at 37 to 57, 93 to 113, 128 to 148, 174 to 194, 204 to 224, and 238 to 258; these read MLAI…FPMF, SMSA…INQI, FIFS…FIGM, LLSF…YTLV, AAVG…AFAW, and AMAT…FILL.

It belongs to the UPF0761 family.

The protein resides in the cell inner membrane. The protein is UPF0761 membrane protein MS0032 of Mannheimia succiniciproducens (strain KCTC 0769BP / MBEL55E).